The following is a 367-amino-acid chain: (E)-2-epi-beta-caryophyllene synthase (367 aa).

Residues aspartate 93, asparagine 234, and serine 238 each contribute to the Mg(2+) site. The short motif at 93 to 97 (DDIAE) is the DDXXE motif element.

Belongs to the terpene synthase family. Mg(2+) is required as a cofactor. Requires Mn(2+) as cofactor.

It catalyses the reaction (2E,6E)-farnesyl diphosphate = (E)-2-epi-beta-caryophyllene + diphosphate. It functions in the pathway secondary metabolite biosynthesis; terpenoid biosynthesis. Its function is as follows. Sesquiterpene synthase converting farnesyl diphosphate to (E)-2-epi-beta-caryophyllene as the major product, and to two other unidentified sesquiterpenes. Has no diterpene synthase activity. This chain is (E)-2-epi-beta-caryophyllene synthase, found in Selaginella moellendorffii (Spikemoss).